The chain runs to 511 residues: Phosphoenolpyruvate carboxylase (511 aa).

It belongs to the PEPCase type 2 family. As to quaternary structure, homotetramer. Mg(2+) serves as cofactor.

The catalysed reaction is oxaloacetate + phosphate = phosphoenolpyruvate + hydrogencarbonate. In terms of biological role, catalyzes the irreversible beta-carboxylation of phosphoenolpyruvate (PEP) to form oxaloacetate (OAA), a four-carbon dicarboxylic acid source for the tricarboxylic acid cycle. This is Phosphoenolpyruvate carboxylase from Saccharolobus islandicus (strain Y.N.15.51 / Yellowstone #2) (Sulfolobus islandicus).